The sequence spans 955 residues: 26S proteasome non-ATPase regulatory subunit 1 (955 aa).

The interval 279–313 (PGSTNTGTVPGSEKDSDAMEAEEKPGSTCVGKSAE) is disordered. Residues 290–303 (SEKDSDAMEAEEKP) are compositionally biased toward basic and acidic residues. 10 PC repeats span residues 403-436 (TATA…PGSA), 441-474 (GGLY…DIVR), 476-510 (GGSL…VTGE), 511-545 (AAGL…EKIL), 547-580 (GLAV…ILRR), 581-616 (SGMY…DVRR), 617-649 (AAVE…PHVR), 651-685 (GAAM…YVRQ), 686-726 (GALI…DVMA), and 729-761 (GAIL…PSVV). 2 disordered regions span residues 839 to 879 (AKKK…NFQL) and 932 to 955 (AHGP…YIDD). 2 stretches are compositionally biased toward basic and acidic residues: residues 842-854 (KEKE…KEEE) and 861-874 (TEKK…KEPE). Residues 938 to 955 (EEEEQEPEPPEPFEYIDD) show a composition bias toward acidic residues.

The protein belongs to the proteasome subunit S1 family. In terms of assembly, component of the 19S proteasome regulatory particle complex. The 26S proteasome consists of a 20S core particle (CP) and two 19S regulatory subunits (RP). The regulatory particle is made of a lid composed of 9 subunits, a base containing 6 ATPases and few additional components including PSMD1. Interacts with ADRM1.

Component of the 26S proteasome, a multiprotein complex involved in the ATP-dependent degradation of ubiquitinated proteins. This complex plays a key role in the maintenance of protein homeostasis by removing misfolded or damaged proteins, which could impair cellular functions, and by removing proteins whose functions are no longer required. Therefore, the proteasome participates in numerous cellular processes, including cell cycle progression, apoptosis, or DNA damage repair. The polypeptide is 26S proteasome non-ATPase regulatory subunit 1 (PSMD1) (Gallus gallus (Chicken)).